The chain runs to 338 residues: Egl nine homolog 1 (338 aa).

Low complexity predominate over residues 1 to 11 (PRAQPAPAQPR). The interval 1-99 (PRAQPAPAQP…PSGGLRPNGQ (99 aa)) is disordered. A Phosphoserine modification is found at Ser-52. Residues Cys-116 and Cys-123 each carry the S-nitrosocysteine modification. The segment at 156-166 (VSQKSDSSKDI) is beta(2)beta(3) 'finger-like' loop. The region spanning 209 to 307 (GRTKAMVACY…RYAITVWYFD (99 aa)) is the Fe2OG dioxygenase domain. Position 217 is an S-nitrosocysteine (Cys-217). Fe cation contacts are provided by His-228 and Asp-230. Residues Cys-238 and Cys-241 each carry the S-nitrosocysteine modification. Position 289 (His-289) interacts with Fe cation. Arg-298 is a binding site for 2-oxoglutarate.

Monomer. Interacts with ING4; the interaction inhibits the hydroxylation of HIF alpha proteins. Interacts with PTGES3 (via PXLE motif); thereby recruiting EGLN1 to the HSP90 pathway to facilitate HIF alpha proteins hydroxylation. Interacts with LIMD1. Found in a complex composed of LIMD1, VHL, EGLN1/PHD2, ELOB and CUL2. Interacts with EPAS1. Interacts with CBFA2T3 and HIF1A. The cofactor is Fe(2+). L-ascorbate serves as cofactor. In terms of processing, S-nitrosylation inhibits the enzyme activity up to 60% under aerobic conditions. Chelation of Fe(2+) has no effect on the S-nitrosylation. It is uncertain whether nitrosylation occurs on Cys-238 or Cys-241. Expressed in heart, liver, kidney, brain, liver and testis. Highest levels in heart, lowest in liver.

Its subcellular location is the cytoplasm. It is found in the nucleus. It carries out the reaction L-prolyl-[hypoxia-inducible factor alpha subunit] + 2-oxoglutarate + O2 = trans-4-hydroxy-L-prolyl-[hypoxia-inducible factor alpha subunit] + succinate + CO2. With respect to regulation, increased activation in hypoxia. Hydroxylation of the C-terminal ODD domain (CODD) proline of HIF1A is activated by cyclosporin A (CsA). Cellular oxygen sensor that catalyzes, under normoxic conditions, the post-translational formation of 4-hydroxyproline in hypoxia-inducible factor (HIF) alpha proteins. Hydroxylates a specific proline found in each of the oxygen-dependent degradation (ODD) domains (N-terminal, NODD, and C-terminal, CODD) of HIF1A. Also hydroxylates HIF2A. Has a preference for the CODD site for both HIF1A and HIF1B. Hydroxylated HIFs are then targeted for proteasomal degradation via the von Hippel-Lindau ubiquitination complex. Under hypoxic conditions, the hydroxylation reaction is attenuated allowing HIFs to escape degradation resulting in their translocation to the nucleus, heterodimerization with HIF1B, and increased expression of hypoxy-inducible genes. EGLN1 is the most important isozyme under normoxia and, through regulating the stability of HIF1, involved in various hypoxia-influenced processes such as angiogenesis in retinal and cardiac functionality. Target proteins are preferentially recognized via a LXXLAP motif. The sequence is that of Egl nine homolog 1 (Egln1) from Rattus norvegicus (Rat).